Consider the following 122-residue polypeptide: Small ribosomal subunit protein uS13 (122 aa).

Residues 97–122 are disordered; it reads PVRGQRTHTNARTRKGPAKAIAGKKK.

This sequence belongs to the universal ribosomal protein uS13 family. As to quaternary structure, part of the 30S ribosomal subunit. Forms a loose heterodimer with protein S19. Forms two bridges to the 50S subunit in the 70S ribosome.

Functionally, located at the top of the head of the 30S subunit, it contacts several helices of the 16S rRNA. In the 70S ribosome it contacts the 23S rRNA (bridge B1a) and protein L5 of the 50S subunit (bridge B1b), connecting the 2 subunits; these bridges are implicated in subunit movement. Contacts the tRNAs in the A and P-sites. This is Small ribosomal subunit protein uS13 from Rhizobium rhizogenes (strain K84 / ATCC BAA-868) (Agrobacterium radiobacter).